Reading from the N-terminus, the 598-residue chain is Elongation factor 4 (598 aa).

Residues 2 to 184 enclose the tr-type G domain; it reads DHIRNFSIIA…AIVKRVPPPR (183 aa). Residues 14-19 and 131-134 contribute to the GTP site; these read DHGKST and NKID.

This sequence belongs to the TRAFAC class translation factor GTPase superfamily. Classic translation factor GTPase family. LepA subfamily.

The protein resides in the cell inner membrane. It catalyses the reaction GTP + H2O = GDP + phosphate + H(+). In terms of biological role, required for accurate and efficient protein synthesis under certain stress conditions. May act as a fidelity factor of the translation reaction, by catalyzing a one-codon backward translocation of tRNAs on improperly translocated ribosomes. Back-translocation proceeds from a post-translocation (POST) complex to a pre-translocation (PRE) complex, thus giving elongation factor G a second chance to translocate the tRNAs correctly. Binds to ribosomes in a GTP-dependent manner. This is Elongation factor 4 from Syntrophus aciditrophicus (strain SB).